A 154-amino-acid polypeptide reads, in one-letter code: Ribonuclease 8 (154 aa).

The signal sequence occupies residues 1-27 (MAPARAGCCPLLLLLLGLWVAQIPVSA). Catalysis depends on H42, which acts as the Proton acceptor. 2 disulfide bridges follow: C64–C118 and C89–C96. Substrate contacts are provided by residues 65–69 (KDLNT) and K90. H149 serves as the catalytic Proton donor.

This sequence belongs to the pancreatic ribonuclease family.

It is found in the secreted. Has a low ribonuclease activity. The chain is Ribonuclease 8 (RNASE8) from Chlorocebus aethiops (Green monkey).